Here is a 1172-residue protein sequence, read N- to C-terminus: Putative cadmium/zinc-transporting ATPase HMA4 (1172 aa).

At 1-93 (MALQNKEEEK…VRVNGETSFK (93 aa)) the chain is on the cytoplasmic side. The region spanning 17 to 83 (QKSYFDVLGI…ALNEARLEAN (67 aa)) is the HMA domain. A helical membrane pass occupies residues 94–115 (NKWPSPFAVVSGLLLLLSFLKF). At 116–118 (VYS) the chain is on the extracellular side. The chain crosses the membrane as a helical span at residues 119–138 (PLRWLAVAAVAAGIYPILAK). Over 139–145 (AFASIKR) the chain is Cytoplasmic. The chain crosses the membrane as a helical span at residues 146–166 (PRIDINILVIITVIATLAMQD). Position 167 (F167) is a topological domain, extracellular. The chain crosses the membrane as a helical span at residues 168–188 (MEAAAVVFLFTISDWLETRAS). The Cytoplasmic portion of the chain corresponds to 189–314 (YKATSVMQSL…KTKSQRLIDK (126 aa)). The helical transmembrane segment at 315 to 337 (CSQYYTPAIILVSACVAIVPVIM) threads the bilayer. Residues 338 to 345 (KVHNLKHW) lie on the Extracellular side of the membrane. The helical transmembrane segment at 346-363 (FHLALVVLVSGCPCGLIL) threads the bilayer. The Cytoplasmic portion of the chain corresponds to 364–656 (STPVATFCAL…KLARRARRKV (293 aa)). The active-site 4-aspartylphosphate intermediate is the D401. 2 residues coordinate Mg(2+): D601 and D605. Residues 657 to 676 (VENVCLSIILKAGILALAFA) traverse the membrane as a helical segment. Topologically, residues 677–680 (GHPL) are extracellular. A helical transmembrane segment spans residues 681–700 (IWAAVLVDVGTCLLVIFNSM). The Cytoplasmic portion of the chain corresponds to 701 to 1172 (LLLREKKKIG…HHHHHHHVSA (472 aa)).

Belongs to the cation transport ATPase (P-type) (TC 3.A.3) family. Type IB subfamily.

Its subcellular location is the membrane. It catalyses the reaction Zn(2+)(in) + ATP + H2O = Zn(2+)(out) + ADP + phosphate + H(+). The enzyme catalyses Cd(2+)(in) + ATP + H2O = Cd(2+)(out) + ADP + phosphate + H(+). Functionally, involved in cadmium/zinc transport. The protein is Putative cadmium/zinc-transporting ATPase HMA4 (HMA4) of Arabidopsis thaliana (Mouse-ear cress).